Consider the following 138-residue polypeptide: Transcription antitermination protein NusB (138 aa).

Belongs to the NusB family.

Involved in transcription antitermination. Required for transcription of ribosomal RNA (rRNA) genes. Binds specifically to the boxA antiterminator sequence of the ribosomal RNA (rrn) operons. This is Transcription antitermination protein NusB from Leptospira interrogans serogroup Icterohaemorrhagiae serovar copenhageni (strain Fiocruz L1-130).